We begin with the raw amino-acid sequence, 555 residues long: Glutamine--tRNA ligase (555 aa).

The short motif at 34-44 (PEPNGYLHIGH) is the 'HIGH' region element. ATP contacts are provided by residues 35–37 (EPN) and 41–47 (HIGHAKS). 2 residues coordinate L-glutamine: aspartate 67 and tyrosine 212. ATP-binding positions include threonine 231, 261-262 (RL), and 269-271 (MSK). Positions 268–272 (VMSKR) match the 'KMSKS' region motif.

Belongs to the class-I aminoacyl-tRNA synthetase family. Monomer.

It localises to the cytoplasm. The catalysed reaction is tRNA(Gln) + L-glutamine + ATP = L-glutaminyl-tRNA(Gln) + AMP + diphosphate. This chain is Glutamine--tRNA ligase, found in Proteus mirabilis (strain HI4320).